Consider the following 235-residue polypeptide: Cytochrome c oxidase subunit 2 (235 aa).

The Mitochondrial intermembrane segment spans residues 1-14; the sequence is MPYPMQLGFQDATS. Residues 15-45 traverse the membrane as a helical segment; the sequence is PIMEELMYFHDHTLMIVFLISSLVLYIIILM. At 46-59 the chain is on the mitochondrial matrix side; the sequence is LTTKLTHTSTMDAQ. Residues 60–87 traverse the membrane as a helical segment; the sequence is EVETIWTILPAVILILIALPSLRILYMM. Topologically, residues 88-235 are mitochondrial intermembrane; that stretch reads DEIYNPYLTV…MQSFLSYLYI (148 aa). Positions 161, 196, 198, 200, 204, and 207 each coordinate Cu cation. A Mg(2+)-binding site is contributed by glutamate 198. Tyrosine 218 is modified (phosphotyrosine).

It belongs to the cytochrome c oxidase subunit 2 family. Component of the cytochrome c oxidase (complex IV, CIV), a multisubunit enzyme composed of 14 subunits. The complex is composed of a catalytic core of 3 subunits MT-CO1, MT-CO2 and MT-CO3, encoded in the mitochondrial DNA, and 11 supernumerary subunits COX4I, COX5A, COX5B, COX6A, COX6B, COX6C, COX7A, COX7B, COX7C, COX8 and NDUFA4, which are encoded in the nuclear genome. The complex exists as a monomer or a dimer and forms supercomplexes (SCs) in the inner mitochondrial membrane with NADH-ubiquinone oxidoreductase (complex I, CI) and ubiquinol-cytochrome c oxidoreductase (cytochrome b-c1 complex, complex III, CIII), resulting in different assemblies (supercomplex SCI(1)III(2)IV(1) and megacomplex MCI(2)III(2)IV(2)). Found in a complex with TMEM177, COA6, COX18, COX20, SCO1 and SCO2. Interacts with TMEM177 in a COX20-dependent manner. Interacts with COX20. Interacts with COX16. The cofactor is Cu cation.

It is found in the mitochondrion inner membrane. The catalysed reaction is 4 Fe(II)-[cytochrome c] + O2 + 8 H(+)(in) = 4 Fe(III)-[cytochrome c] + 2 H2O + 4 H(+)(out). Component of the cytochrome c oxidase, the last enzyme in the mitochondrial electron transport chain which drives oxidative phosphorylation. The respiratory chain contains 3 multisubunit complexes succinate dehydrogenase (complex II, CII), ubiquinol-cytochrome c oxidoreductase (cytochrome b-c1 complex, complex III, CIII) and cytochrome c oxidase (complex IV, CIV), that cooperate to transfer electrons derived from NADH and succinate to molecular oxygen, creating an electrochemical gradient over the inner membrane that drives transmembrane transport and the ATP synthase. Cytochrome c oxidase is the component of the respiratory chain that catalyzes the reduction of oxygen to water. Electrons originating from reduced cytochrome c in the intermembrane space (IMS) are transferred via the dinuclear copper A center (CU(A)) of subunit 2 and heme A of subunit 1 to the active site in subunit 1, a binuclear center (BNC) formed by heme A3 and copper B (CU(B)). The BNC reduces molecular oxygen to 2 water molecules using 4 electrons from cytochrome c in the IMS and 4 protons from the mitochondrial matrix. This chain is Cytochrome c oxidase subunit 2 (MT-CO2), found in Didelphis virginiana (North American opossum).